We begin with the raw amino-acid sequence, 659 residues long: A-type ATP synthase subunit I (659 aa).

Transmembrane regions (helical) follow at residues 376 to 396 (FFFG…VISA), 415 to 435 (IMLW…SYCG), 460 to 480 (VMAL…GFIV), 489 to 509 (AAIL…LFAL), 513 to 533 (LGIP…LFVV), 542 to 562 (MAVL…LSYA), 566 to 586 (ALAL…NMVW), and 590 to 610 (IGPI…GHIF).

This sequence belongs to the V-ATPase 116 kDa subunit family. In terms of assembly, has multiple subunits with at least A(3), B(3), C, D, E, F, H, I and proteolipid K(x).

The protein localises to the cell membrane. Its function is as follows. Component of the A-type ATP synthase that produces ATP from ADP in the presence of a proton gradient across the membrane. This is A-type ATP synthase subunit I from Pyrococcus abyssi (strain GE5 / Orsay).